A 461-amino-acid polypeptide reads, in one-letter code: MSVRIEHDTFGEIEVPADKYWGAQTERSKRNFPVGKERMPIEVVYGFAQLKRAAALANFDLGKLSEAKKDAIVYACDQILSGELDEHFPLVVWQTGSGTQSNMNVNEVVSYVANMYLKDHQIDESIHPNDDVNKSQSSNDTFPTAMHVALYQEVETKLEPALKLLRNTLKEKEDKFDSIIKIGRTHLQDATPIKLGQEISGWRYMLDRCEIMLSESKKHILNLAIGGTAVGTGINAHPEFGDKVAHYISENTGYPFVSSENKFHALTAHDEVVQLHGTLKALAGDLMKIANDVRWLASGPRAGLAEISIPENEPGSSIMPGKVNPTQCEMLTMVAVQVMGNDTVVGFASSQGNFELNVYKPVIMHNTLQSIYLLADGMETFNNNCAVGIEPIEENIDNYLNQSLMLVTALNPHIGYEKAAQIAKKAHKEGLTLKESAIQTGYVTEEQFEAWIKPEDMVDPH.

Residues 97–99 (SGT), 127–130 (HPND), 137–139 (SSN), and T185 contribute to the substrate site. Catalysis depends on H186, which acts as the Proton donor/acceptor. S316 is a catalytic residue. Residues S317 and 322–324 (KVN) contribute to the substrate site.

This sequence belongs to the class-II fumarase/aspartase family. Fumarase subfamily. Homotetramer.

The protein localises to the cytoplasm. The catalysed reaction is (S)-malate = fumarate + H2O. It functions in the pathway carbohydrate metabolism; tricarboxylic acid cycle; (S)-malate from fumarate: step 1/1. Functionally, involved in the TCA cycle. Catalyzes the stereospecific interconversion of fumarate to L-malate. The chain is Fumarate hydratase class II from Staphylococcus aureus (strain MSSA476).